A 169-amino-acid polypeptide reads, in one-letter code: GTP-dependent dephospho-CoA kinase (169 aa).

Residues Asp45, Asp64, Lys66, and Glu121 each coordinate GTP.

Belongs to the GTP-dependent DPCK family.

The enzyme catalyses 3'-dephospho-CoA + GTP = GDP + CoA + H(+). The protein operates within cofactor biosynthesis; coenzyme A biosynthesis. Functionally, catalyzes the GTP-dependent phosphorylation of the 3'-hydroxyl group of dephosphocoenzyme A to form coenzyme A (CoA). This is GTP-dependent dephospho-CoA kinase from Methanosphaera stadtmanae (strain ATCC 43021 / DSM 3091 / JCM 11832 / MCB-3).